We begin with the raw amino-acid sequence, 200 residues long: ATP-dependent Clp protease proteolytic subunit (200 aa).

The Nucleophile role is filled by S101. The active site involves H126.

Belongs to the peptidase S14 family. As to quaternary structure, component of the chloroplastic Clp protease core complex.

It is found in the plastid. The protein localises to the chloroplast stroma. The catalysed reaction is Hydrolysis of proteins to small peptides in the presence of ATP and magnesium. alpha-casein is the usual test substrate. In the absence of ATP, only oligopeptides shorter than five residues are hydrolyzed (such as succinyl-Leu-Tyr-|-NHMec, and Leu-Tyr-Leu-|-Tyr-Trp, in which cleavage of the -Tyr-|-Leu- and -Tyr-|-Trp bonds also occurs).. Cleaves peptides in various proteins in a process that requires ATP hydrolysis. Has a chymotrypsin-like activity. Plays a major role in the degradation of misfolded proteins. This Adiantum capillus-veneris (Maidenhair fern) protein is ATP-dependent Clp protease proteolytic subunit.